A 336-amino-acid polypeptide reads, in one-letter code: uncharacterized protein (336 aa).

The first 21 residues, 1-21 (MSELVLITGITGFVASHSAEA), serve as a signal peptide directing secretion. Residue K38 participates in NADP(+) binding. T153 carries the phosphothreonine modification. Y167 serves as a coordination point for NADP(+).

The protein belongs to the NAD(P)-dependent epimerase/dehydratase family. Dihydroflavonol-4-reductase subfamily.

This is an uncharacterized protein from Schizosaccharomyces pombe (strain 972 / ATCC 24843) (Fission yeast).